A 433-amino-acid chain; its full sequence is Histidinol dehydrogenase (433 aa).

NAD(+) is bound by residues Tyr-133, Gln-194, and Asn-217. Residues Ser-240, Gln-262, and His-265 each contribute to the substrate site. The Zn(2+) site is built by Gln-262 and His-265. Residues Glu-330 and His-331 each act as proton acceptor in the active site. 4 residues coordinate substrate: His-331, Asp-364, Glu-418, and His-423. Residue Asp-364 participates in Zn(2+) binding. His-423 is a binding site for Zn(2+).

This sequence belongs to the histidinol dehydrogenase family. It depends on Zn(2+) as a cofactor.

The catalysed reaction is L-histidinol + 2 NAD(+) + H2O = L-histidine + 2 NADH + 3 H(+). Its pathway is amino-acid biosynthesis; L-histidine biosynthesis; L-histidine from 5-phospho-alpha-D-ribose 1-diphosphate: step 9/9. Functionally, catalyzes the sequential NAD-dependent oxidations of L-histidinol to L-histidinaldehyde and then to L-histidine. This is Histidinol dehydrogenase from Hydrogenovibrio crunogenus (strain DSM 25203 / XCL-2) (Thiomicrospira crunogena).